A 381-amino-acid polypeptide reads, in one-letter code: L-lactate dehydrogenase (381 aa).

Residues 1–380 (MIISASTDYR…NRDSLAVSER (380 aa)) form the FMN hydroxy acid dehydrogenase domain. Y24 contacts substrate. Positions 106 and 127 each coordinate FMN. Substrate is bound at residue Y129. Residue T155 coordinates FMN. Residue R164 coordinates substrate. K251 contributes to the FMN binding site. Catalysis depends on H275, which acts as the Proton acceptor. Residue R278 coordinates substrate. 306–330 (DSGIRTGLDVVRMIALGADSVLLGR) serves as a coordination point for FMN.

It belongs to the FMN-dependent alpha-hydroxy acid dehydrogenase family. FMN is required as a cofactor.

It localises to the cell inner membrane. It catalyses the reaction (S)-lactate + A = pyruvate + AH2. Its function is as follows. Catalyzes the conversion of L-lactate to pyruvate. Is coupled to the respiratory chain. The protein is L-lactate dehydrogenase of Yersinia pseudotuberculosis serotype O:1b (strain IP 31758).